The chain runs to 214 residues: MRVKHKPWAKDRLEEFPAIYIKNPEDFKGQWHEVFGNDNPIHIEIGSGKGQFISGMAKANPEINYIGIEMIESVLVSALDKAIEVDVPNLRLVARDAKLLEDCFEKGEIAQIYLNFSDPWPKKRHTKRRLTNPTFLTIYERLLPKAGEIHFKTDNRSLFEYSLVAFSEYNMLLTFVSLDLHNSDYEGNIKTEYEEKFSAKGFPIYRLEAKFDRN.

S-adenosyl-L-methionine contacts are provided by glutamate 44, glutamate 69, aspartate 96, and aspartate 118. Residue aspartate 118 is part of the active site. Substrate is bound by residues lysine 122, aspartate 154, and 191 to 194 (TEYE).

It belongs to the class I-like SAM-binding methyltransferase superfamily. TrmB family.

It catalyses the reaction guanosine(46) in tRNA + S-adenosyl-L-methionine = N(7)-methylguanosine(46) in tRNA + S-adenosyl-L-homocysteine. Its pathway is tRNA modification; N(7)-methylguanine-tRNA biosynthesis. Its function is as follows. Catalyzes the formation of N(7)-methylguanine at position 46 (m7G46) in tRNA. This is tRNA (guanine-N(7)-)-methyltransferase from Listeria monocytogenes serovar 1/2a (strain ATCC BAA-679 / EGD-e).